We begin with the raw amino-acid sequence, 64 residues long: Sperm protamine P1 (64 aa).

A disordered region spans residues M1–Y64.

This sequence belongs to the protamine P1 family. In terms of tissue distribution, testis.

The protein localises to the nucleus. The protein resides in the chromosome. Protamines substitute for histones in the chromatin of sperm during the haploid phase of spermatogenesis. They compact sperm DNA into a highly condensed, stable and inactive complex. The protein is Sperm protamine P1 (PRM1) of Dromiciops gliroides (Monito del Monte).